Consider the following 151-residue polypeptide: uncharacterized protein (151 aa).

This is an uncharacterized protein from Escherichia coli.